A 488-amino-acid chain; its full sequence is Katanin p60 ATPase-containing subunit A-like 1 (488 aa).

At M1 the chain carries N-acetylmethionine. The disordered stretch occupies residues G128–F179. Residues S142–M167 are compositionally biased toward basic and acidic residues. Residue S172 is modified to Phosphoserine. G246–T253 contacts ATP.

It belongs to the AAA ATPase family. Katanin p60 subunit A1 subfamily. A-like 1 sub-subfamily. In terms of assembly, interacts with KATNB1 and KATNBL1.

Its subcellular location is the cytoplasm. The protein resides in the cytoskeleton. It localises to the spindle pole. The protein localises to the spindle. The enzyme catalyses n ATP + n H2O + a microtubule = n ADP + n phosphate + (n+1) alpha/beta tubulin heterodimers.. Regulates microtubule dynamics in Sertoli cells, a process that is essential for spermiogenesis and male fertility. Severs microtubules in an ATP-dependent manner, promoting rapid reorganization of cellular microtubule arrays. Has microtubule-severing activity in vitro. The chain is Katanin p60 ATPase-containing subunit A-like 1 (Katnal1) from Rattus norvegicus (Rat).